The sequence spans 221 residues: Sigma non-opioid intracellular receptor 1 (221 aa).

Over 1 to 4 (MALW) the chain is Lumenal. Residues 5–27 (RGLRAVLAVAGLAVAVQLLRGWL) traverse the membrane as a helical segment. The Cytoplasmic portion of the chain corresponds to 28 to 221 (GSKSYVFNRE…STHLSELGFF (194 aa)). Residues 96 to 103 (SLTEYVLL) are important for ligand-binding. Residues 174 to 221 (FIPSTLGFALADTIFSTQDFLTLFYTVKVYGKALLLETSTHLSELGFF) are C-terminal hydrophobic region.

The protein belongs to the ERG2 family. As to quaternary structure, homotrimer.

The protein resides in the nucleus inner membrane. It localises to the nucleus outer membrane. The protein localises to the nucleus envelope. Its subcellular location is the cytoplasmic vesicle. It is found in the endoplasmic reticulum membrane. The protein resides in the membrane. Its function is as follows. May function in lipid transport from the endoplasmic reticulum and be involved in a wide array of cellular functions probably through regulation of the biogenesis of lipid microdomains at the plasma membrane. May regulate calcium efflux at the endoplasmic reticulum. In Xenopus tropicalis (Western clawed frog), this protein is Sigma non-opioid intracellular receptor 1 (sigmar1).